A 271-amino-acid polypeptide reads, in one-letter code: MLPTVFIVSDGTGITAETFAHSILSQFDQKFRLVRVPFIDSIEKAYGTVQKIDDAAQHDGRRPIVFTTLVDGESNEIVKRSNALVLDMFQRFVEPLEQELQLKSSHAMGRVHQNADTEEYKTRIEAINFSLAHDDGQSNRNLADADVILIGVSRSGKTPTSLYLAMQYGVKAANYPLIPEDFERGKLPTPLHPHRDKLFGLSIDPMRLSEIRNERRPGSKYAAPENCRYEINEAEAMMRREGVKWLSSTHKSIEEIATTILQEIKLERQSY.

Residue Gly-151 to Thr-158 coordinates ADP.

Belongs to the pyruvate, phosphate/water dikinase regulatory protein family. PSRP subfamily.

The catalysed reaction is [pyruvate, water dikinase] + ADP = [pyruvate, water dikinase]-phosphate + AMP + H(+). It catalyses the reaction [pyruvate, water dikinase]-phosphate + phosphate + H(+) = [pyruvate, water dikinase] + diphosphate. Its function is as follows. Bifunctional serine/threonine kinase and phosphorylase involved in the regulation of the phosphoenolpyruvate synthase (PEPS) by catalyzing its phosphorylation/dephosphorylation. This Burkholderia thailandensis (strain ATCC 700388 / DSM 13276 / CCUG 48851 / CIP 106301 / E264) protein is Putative phosphoenolpyruvate synthase regulatory protein.